Here is a 305-residue protein sequence, read N- to C-terminus: Nitrogen assimilation regulatory protein nac (305 aa).

Positions 1–58 (MNLRRLKYFVKIVDIGSLTQAAEVLHIAQPALSQQVATLEGEMDQQLLIRTKRGVTPT) constitute an HTH lysR-type domain. The segment at residues 18–37 (LTQAAEVLHIAQPALSQQVA) is a DNA-binding region (H-T-H motif).

It belongs to the LysR transcriptional regulatory family.

Functionally, transcriptional activator for the hut, put and ure operons and repressor for the gdh and gltB operons in response to nitrogen limitation. Negative regulator of its own expression. The sequence is that of Nitrogen assimilation regulatory protein nac (nac) from Klebsiella aerogenes (Enterobacter aerogenes).